Here is a 126-residue protein sequence, read N- to C-terminus: Defensin-like protein 183 (126 aa).

The N-terminal stretch at M1–A26 is a signal peptide. Disulfide bonds link C29–C68, C36–C55, C39–C62, C43–C64, C80–C126, C91–C111, C96–C120, and C100–C122.

This sequence belongs to the DEFL family.

It is found in the secreted. The polypeptide is Defensin-like protein 183 (LCR19) (Arabidopsis thaliana (Mouse-ear cress)).